Reading from the N-terminus, the 105-residue chain is MVKLNSIEEVDLLANTKSAKKRIAIIKKRTLRNKMIKSRVKTFIRRFNESLATKDIEAIKERLRLAVKELDKAVSKGVLHKNTAARKKSKLYAKFNALLKSASNE.

This sequence belongs to the bacterial ribosomal protein bS20 family.

In terms of biological role, binds directly to 16S ribosomal RNA. The chain is Small ribosomal subunit protein bS20 from Caldanaerobacter subterraneus subsp. tengcongensis (strain DSM 15242 / JCM 11007 / NBRC 100824 / MB4) (Thermoanaerobacter tengcongensis).